Reading from the N-terminus, the 243-residue chain is MESSGLRAPCSLLVLLSALVLPPTLAIEVYTDREVYGTVGSRVTLSCSFWSSEWISDDVSVTWHYQPDHSREMYSIFHYAKGQPSIDAGVFKDRIEWVGSPKWKDASIVLHNLELIDNGTFTCDVKNPPDVVGKSSYVHLQVQEKGAARAGLVLGIIIAVALALVIVVTILILLIRYCWLRRQVRVQRELSALERGKLHKAKDSSKRSSRQTPILYAMLDQTRGKASEKKGKGGIGDSRKDRK.

Residues 1 to 26 form the signal peptide; it reads MESSGLRAPCSLLVLLSALVLPPTLA. One can recognise an Ig-like V-type domain in the interval 27–141; the sequence is IEVYTDREVY…VGKSSYVHLQ (115 aa). Topologically, residues 27–154 are extracellular; it reads IEVYTDREVY…KGAARAGLVL (128 aa). C47 and C123 are oxidised to a cystine. The N-linked (GlcNAc...) asparagine glycan is linked to N118. Residues 155-175 form a helical membrane-spanning segment; it reads GIIIAVALALVIVVTILILLI. Topologically, residues 176–243 are cytoplasmic; it reads RYCWLRRQVR…GIGDSRKDRK (68 aa). The segment at 201-243 is disordered; it reads AKDSSKRSSRQTPILYAMLDQTRGKASEKKGKGGIGDSRKDRK. Positions 222–243 are enriched in basic and acidic residues; it reads TRGKASEKKGKGGIGDSRKDRK.

This sequence belongs to the myelin P0 protein family.

It localises to the cell membrane. In terms of biological role, creation of an extracellular membrane face which guides the wrapping process and ultimately compacts adjacent lamellae. This is Myelin protein P0 (mpz) from Xenopus tropicalis (Western clawed frog).